We begin with the raw amino-acid sequence, 87 residues long: MRSLRLRTVVVATIVVCLSVLLSPTEVDGSCDFPLGACTPFRDCKESCIKFKTRAGQTFFDGKCRPRDRPSVWTACFCCYYDSIGAQ.

Positions 1 to 29 (MRSLRLRTVVVATIVVCLSVLLSPTEVDG) are cleaved as a signal peptide. 4 cysteine pairs are disulfide-bonded: Cys31-Cys79, Cys38-Cys64, Cys44-Cys76, and Cys48-Cys78.

Belongs to the DEFL family.

It is found in the secreted. This is Defensin-like protein 100 from Arabidopsis thaliana (Mouse-ear cress).